Consider the following 520-residue polypeptide: Hydroxymethylglutaryl-CoA synthase, cytoplasmic (520 aa).

Position 4 is a phosphoserine (Ser4). (3S)-3-hydroxy-3-methylglutaryl-CoA-binding residues include Asp43 and Ala44. 44-46 lines the CoA pocket; sequence AGK. Lys46 carries the N6-acetyllysine modification. Glu95 functions as the Proton donor/acceptor in the catalytic mechanism. (3S)-3-hydroxy-3-methylglutaryl-CoA-binding residues include Cys129, Asn167, Thr171, Ser221, and His264. The Acyl-thioester intermediate role is filled by Cys129. CoA is bound at residue Asn167. Ser221 contributes to the CoA binding site. Catalysis depends on His264, which acts as the Proton donor/acceptor. Positions 269 and 273 each coordinate CoA. Lys273, Asn343, and Ser377 together coordinate (3S)-3-hydroxy-3-methylglutaryl-CoA. Lys273 is subject to N6-acetyllysine. A disordered region spans residues 488–520; the sequence is TATEHIPSPAKKVPRLPATSAESESAVISNGEH. Phosphoserine is present on residues Ser495 and Ser516. Polar residues predominate over residues 507–520; that stretch reads SAESESAVISNGEH.

Belongs to the thiolase-like superfamily. HMG-CoA synthase family. Homodimer.

It is found in the cytoplasm. The catalysed reaction is acetoacetyl-CoA + acetyl-CoA + H2O = (3S)-3-hydroxy-3-methylglutaryl-CoA + CoA + H(+). It functions in the pathway metabolic intermediate biosynthesis; (R)-mevalonate biosynthesis; (R)-mevalonate from acetyl-CoA: step 2/3. In terms of biological role, catalyzes the condensation of acetyl-CoA with acetoacetyl-CoA to form HMG-CoA, which is converted by HMG-CoA reductase (HMGCR) into mevalonate, a precursor for cholesterol synthesis. The polypeptide is Hydroxymethylglutaryl-CoA synthase, cytoplasmic (Mus musculus (Mouse)).